The chain runs to 548 residues: Acetolactate synthase isozyme 2 large subunit (548 aa).

Glu47 contributes to the thiamine diphosphate binding site. Residues Arg149, 251–272 (HGTK…VGAR), and 294–313 (DIDP…LQGD) contribute to the FAD site. The segment at 377-457 (QHQMWAAQHI…LKIVLLDNQR (81 aa)) is thiamine pyrophosphate binding. Positions 428 and 455 each coordinate Mg(2+).

The protein belongs to the TPP enzyme family. Tetramer of two large (IlvG) and two small (IlvM) chains. Requires FAD as cofactor. Mg(2+) is required as a cofactor. The cofactor is thiamine diphosphate.

The catalysed reaction is 2 pyruvate + H(+) = (2S)-2-acetolactate + CO2. It functions in the pathway amino-acid biosynthesis; L-isoleucine biosynthesis; L-isoleucine from 2-oxobutanoate: step 1/4. It participates in amino-acid biosynthesis; L-valine biosynthesis; L-valine from pyruvate: step 1/4. Inhibited by the herbicides chlorimuron ethyl, chlorsulfuron and imazapyr. Its function is as follows. Catalyzes the first step in the biosynthesis of branched-chain amino acids. This Escherichia coli (strain K12) protein is Acetolactate synthase isozyme 2 large subunit (ilvG).